Reading from the N-terminus, the 282-residue chain is Elongation factor Ts (282 aa).

The segment at 79–82 is involved in Mg(2+) ion dislocation from EF-Tu; that stretch reads TDFV.

The protein belongs to the EF-Ts family.

Its subcellular location is the cytoplasm. Its function is as follows. Associates with the EF-Tu.GDP complex and induces the exchange of GDP to GTP. It remains bound to the aminoacyl-tRNA.EF-Tu.GTP complex up to the GTP hydrolysis stage on the ribosome. The sequence is that of Elongation factor Ts from Colwellia psychrerythraea (strain 34H / ATCC BAA-681) (Vibrio psychroerythus).